The following is a 656-amino-acid chain: Putative cysteine-rich receptor-like protein kinase 32 (656 aa).

A signal peptide spans 1–23 (MCLQNLLSILCFVLAISFGYVSA). Gnk2-homologous domains lie at 24–126 (QKCV…NSSF) and 134–238 (PTMV…GSEY). Topologically, residues 24–262 (QKCVDSMFFR…PDGKTISTGA (239 aa)) are extracellular. Asn35, Asn52, Asn61, Asn103, and Asn123 each carry an N-linked (GlcNAc...) asparagine glycan. The helical transmembrane segment at 263-283 (IVAVVVSVVIFVVLLALVLVI) threads the bilayer. Residues 284-656 (RKRRQSYKTL…SASITRVTPR (373 aa)) are Cytoplasmic-facing. Positions 321-606 (FSRNNKLGKG…IFQMLTNSSI (286 aa)) constitute a Protein kinase domain. ATP is bound by residues 327–335 (LGKGGFGEV) and Lys349. Tyr394 bears the Phosphotyrosine mark. Asp454 acts as the Proton acceptor in catalysis. Ser458 is modified (phosphoserine). Position 494 is a phosphothreonine (Thr494). A Phosphotyrosine modification is found at Tyr502.

This sequence belongs to the protein kinase superfamily. Ser/Thr protein kinase family. CRK subfamily.

Its subcellular location is the membrane. The enzyme catalyses L-seryl-[protein] + ATP = O-phospho-L-seryl-[protein] + ADP + H(+). The catalysed reaction is L-threonyl-[protein] + ATP = O-phospho-L-threonyl-[protein] + ADP + H(+). This Arabidopsis thaliana (Mouse-ear cress) protein is Putative cysteine-rich receptor-like protein kinase 32 (CRK32).